We begin with the raw amino-acid sequence, 391 residues long: NAD(P)H-quinone oxidoreductase subunit H, chloroplastic (391 aa).

It belongs to the complex I 49 kDa subunit family. In terms of assembly, NDH is composed of at least 16 different subunits, 5 of which are encoded in the nucleus.

The protein localises to the plastid. It is found in the chloroplast thylakoid membrane. It carries out the reaction a plastoquinone + NADH + (n+1) H(+)(in) = a plastoquinol + NAD(+) + n H(+)(out). The enzyme catalyses a plastoquinone + NADPH + (n+1) H(+)(in) = a plastoquinol + NADP(+) + n H(+)(out). NDH shuttles electrons from NAD(P)H:plastoquinone, via FMN and iron-sulfur (Fe-S) centers, to quinones in the photosynthetic chain and possibly in a chloroplast respiratory chain. The immediate electron acceptor for the enzyme in this species is believed to be plastoquinone. Couples the redox reaction to proton translocation, and thus conserves the redox energy in a proton gradient. The sequence is that of NAD(P)H-quinone oxidoreductase subunit H, chloroplastic from Nephroselmis olivacea (Green alga).